A 104-amino-acid chain; its full sequence is Protamine-2 (104 aa).

Positions 1 to 91 (MVRYRMRSPS…RRGCRRSRRR (91 aa)) are disordered. Phosphoserine is present on residues Ser8, Ser10, and Ser33. The span at 33 to 44 (SPERVEDYGRTE) shows a compositional bias: basic and acidic residues. The segment covering 45–91 (RGHHHRHRRCKRLHRIHKRRRSCRRRRRHSCRHRRRHRRGCRRSRRR) has biased composition (basic residues).

The protein belongs to the protamine P2 family. In terms of assembly, interacts with TDRP. Proteolytic processing into mature chains is required for histone eviction during spermatogenesis. Transition proteins (TNP1 and TNP2) are required for processing. In terms of tissue distribution, testis.

The protein resides in the nucleus. It is found in the chromosome. Functionally, protamines substitute for histones in the chromatin of sperm during the haploid phase of spermatogenesis. They compact sperm DNA into a highly condensed, stable and inactive complex. In Rattus norvegicus (Rat), this protein is Protamine-2 (Prm2).